Consider the following 1312-residue polypeptide: DNA repair protein RAD50.L (1312 aa).

Residues arginine 13, asparagine 38, glycine 39, glycine 41, lysine 42, threonine 43, threonine 44, valine 67, aspartate 69, and glutamine 159 each coordinate ATP. Mg(2+) is bound at residue threonine 43. Residue glutamine 159 participates in Mg(2+) binding. 3 coiled-coil regions span residues valine 203 to glutamate 342, leucine 415 to arginine 558, and isoleucine 587 to lysine 628. The 100-residue stretch at serine 635–proline 734 folds into the Zinc-hook domain. The Zn(2+) site is built by cysteine 681 and cysteine 684. Residues leucine 712 to asparagine 1070 adopt a coiled-coil conformation.

This sequence belongs to the SMC family. RAD50 subfamily. In terms of assembly, component of the MRN complex composed of two heterodimers RAD50 and MRE11 associated with a single NBN. Requires Zn(2+) as cofactor.

It localises to the nucleus. Its subcellular location is the chromosome. The protein resides in the telomere. The catalysed reaction is ATP + H2O = ADP + phosphate + H(+). In terms of biological role, component of the MRN complex, which plays a central role in double-strand break (DSB) repair, DNA recombination, maintenance of telomere integrity and meiosis. The MRN complex is involved in the repair of DNA double-strand breaks (DSBs) via homologous recombination (HR), an error-free mechanism which primarily occurs during S and G2 phases. The complex (1) mediates the end resection of damaged DNA, which generates proper single-stranded DNA, a key initial steps in HR, and is (2) required for the recruitment of other repair factors and efficient activation of ATM and ATR upon DNA damage. The MRN complex possesses single-strand endonuclease activity and double-strand-specific 3'-5' exonuclease activity, which are provided by mre11, to initiate end resection, which is required for single-strand invasion and recombination. Within the complex, rad50 is both required to bind DNA ends and hold them in close proximity and regulate the activity of MRE11. Rad50 provides an ATP-dependent control of MRE11 by positioning DNA ends into the mre11 active site: ATP-binding induces a large structural change from an open form with accessible MRE11 nuclease sites into a closed form. The MRN complex is also required for DNA damage signaling via activation of the atm and atr kinases: the nuclease activity of mre11 is not required to activate ATM and ATR. The MRN complex promotes recruitment of topbp1 to DNA damage sites. The MRN complex and rbbp8/CtIP are also required for chromosome alignment during metaphase. The sequence is that of DNA repair protein RAD50.L from Xenopus laevis (African clawed frog).